Here is a 297-residue protein sequence, read N- to C-terminus: MTILDKRQIQRFASDTDIETLSKAIDDDGVAIVRSVVSRDVIQRLQKEVESSDQPVWLEDNPSLKDSKFPSQARHANNLVPASKTYRDDILNNSAVHTTCKAVFRDVGDYWLTTGILRTTKPGSPAQGFHRDALLYPVLQYQPPTSPPLTVALLVSMTDATVANGATRVILGSHKWETVGTPSEDQAVRAELDAGDMLVIHQRLVHAGGEHTHQAPDTRRMLLMFLTSCQLVALESPLALSRELVETMTPLAQKMVGWRTVRPVEPNTVGLNTHRSGCLEDGLKLRAAKPLEGQDGH.

Residues histidine 130, aspartate 132, and histidine 206 each contribute to the Fe cation site.

This sequence belongs to the PhyH family. Homodimer. Fe cation is required as a cofactor.

It functions in the pathway secondary metabolite biosynthesis; terpenoid biosynthesis. In terms of biological role, iron/alpha-ketoglutarate-dependent dioxygenase; part of the gene cluster that mediates the biosynthesis of calidodehydroaustin, a fungal meroterpenoid. The first step of the pathway is the synthesis of 3,5-dimethylorsellinic acid by the polyketide synthase ausA. 3,5-dimethylorsellinic acid is then prenylated by the polyprenyl transferase ausN. Further epoxidation by the FAD-dependent monooxygenase ausM and cyclization by the probable terpene cyclase ausL lead to the formation of protoaustinoid A. Protoaustinoid A is then oxidized to spiro-lactone preaustinoid A3 by the combined action of the FAD-binding monooxygenases ausB and ausC, and the dioxygenase ausE. Acid-catalyzed keto-rearrangement and ring contraction of the tetraketide portion of preaustinoid A3 by ausJ lead to the formation of preaustinoid A4. The aldo-keto reductase ausK, with the help of ausH, is involved in the next step by transforming preaustinoid A4 into isoaustinone which is in turn hydroxylated by the P450 monooxygenase ausI to form austinolide. The cytochrome P450 monooxygenase ausG modifies austinolide to austinol. Austinol is further acetylated to austin by the O-acetyltransferase ausP, which spontaneously changes to dehydroaustin. The cytochrome P450 monooxygenase ausR then converts dehydroaustin is into 7-dehydrodehydroaustin. The hydroxylation catalyzed by ausR permits the O-acetyltransferase ausQ to add an additional acetyl group to the molecule, leading to the formation of acetoxydehydroaustin. The short chain dehydrogenase ausT catalyzes the reduction of the double bond present between carbon atoms 1 and 2 to convert 7-dehydrodehydroaustin into 1,2-dihydro-7-hydroxydehydroaustin. AusQ catalyzes not only an acetylation reaction but also the addition of the PKS ausV diketide product to 1,2-dihydro-7-hydroxydehydroaustin, forming precalidodehydroaustin. Finally, the iron/alpha-ketoglutarate-dependent dioxygenase converts precalidodehydroaustin into calidodehydroaustin. This is Iron/alpha-ketoglutarate-dependent dioxygenase ausU from Aspergillus calidoustus.